A 429-amino-acid chain; its full sequence is UDP-N-acetylglucosamine 1-carboxyvinyltransferase (429 aa).

22–23 contributes to the phosphoenolpyruvate binding site; the sequence is KN. Arg-102 contacts UDP-N-acetyl-alpha-D-glucosamine. The Proton donor role is filled by Cys-126. Position 126 is a 2-(S-cysteinyl)pyruvic acid O-phosphothioketal (Cys-126). Residues 131–135, Asp-316, and Ile-338 each bind UDP-N-acetyl-alpha-D-glucosamine; that span reads RPVDL.

The protein belongs to the EPSP synthase family. MurA subfamily.

It is found in the cytoplasm. It catalyses the reaction phosphoenolpyruvate + UDP-N-acetyl-alpha-D-glucosamine = UDP-N-acetyl-3-O-(1-carboxyvinyl)-alpha-D-glucosamine + phosphate. Its pathway is cell wall biogenesis; peptidoglycan biosynthesis. Cell wall formation. Adds enolpyruvyl to UDP-N-acetylglucosamine. This is UDP-N-acetylglucosamine 1-carboxyvinyltransferase from Methylorubrum extorquens (strain CM4 / NCIMB 13688) (Methylobacterium extorquens).